The following is a 138-amino-acid chain: Acidic phospholipase A2 ammodytin I1 (138 aa).

The N-terminal stretch at methionine 1–glycine 16 is a signal peptide. Disulfide bonds link cysteine 42–cysteine 131, cysteine 44–cysteine 60, cysteine 59–cysteine 111, cysteine 65–cysteine 138, cysteine 66–cysteine 104, cysteine 73–cysteine 97, and cysteine 91–cysteine 102. Residues tyrosine 43, glycine 45, and glycine 47 each coordinate Ca(2+). Histidine 63 is an active-site residue. A Ca(2+)-binding site is contributed by aspartate 64. Residue aspartate 105 is part of the active site.

It belongs to the phospholipase A2 family. Group II subfamily. D49 sub-subfamily. Ca(2+) is required as a cofactor. As to expression, expressed by the venom gland.

The protein resides in the secreted. It carries out the reaction a 1,2-diacyl-sn-glycero-3-phosphocholine + H2O = a 1-acyl-sn-glycero-3-phosphocholine + a fatty acid + H(+). In terms of biological role, snake venom phospholipase A2 (PLA2) that has enzymatic activity but is non-toxic. PLA2 catalyzes the calcium-dependent hydrolysis of the 2-acyl groups in 3-sn-phosphoglycerides. In Vipera ammodytes ammodytes (Western sand viper), this protein is Acidic phospholipase A2 ammodytin I1.